The sequence spans 298 residues: H-2 class I histocompatibility antigen, alpha chain (298 aa).

The Extracellular portion of the chain corresponds to 1–244; the sequence is RYEPRARWIE…EPPSSTKTNT (244 aa). A glycan (N-linked (GlcNAc...) asparagine) is linked at asparagine 43. Cysteine 58 and cysteine 121 are disulfide-bonded. Asparagine 133 carries an N-linked (GlcNAc...) asparagine glycan. The region spanning 142–230 is the Ig-like C1-type domain; the sequence is PKAHVTHHRR…EGLPEPLTLR (89 aa). A disulfide bridge connects residues cysteine 160 and cysteine 216. The helical transmembrane segment at 245-265 threads the bilayer; the sequence is VIIAVPVVLGAVVILGAVMAF. Residues 266–298 lie on the Cytoplasmic side of the membrane; sequence VMKRRRNTGGKGGDYALAPVSQSSDMSLPDCKV. Positions 277–298 are disordered; sequence GGDYALAPVSQSSDMSLPDCKV. Phosphoserine occurs at positions 289 and 292.

This sequence belongs to the MHC class I family. Heterodimer of an alpha chain and a beta chain (beta-2-microglobulin).

It localises to the membrane. Its function is as follows. Involved in the presentation of foreign antigens to the immune system. The protein is H-2 class I histocompatibility antigen, alpha chain (H2-D1) of Mus musculus (Mouse).